A 1353-amino-acid chain; its full sequence is Tenascin-R (1353 aa).

The N-terminal stretch at 1-33 (MGTDSENPVLRNVLISFNLLLLGAVLKPFECRL) is a signal peptide. Residues 132-156 (SLQELLSRIEMLEREVSMLRDQCNS) are a coiled coil. Residues Asn179 and Asn197 are each glycosylated (N-linked (GlcNAc...) asparagine). EGF-like domains follow at residues 187–198 (CICSEGWAGSNC), 234–260 (CPAG…GEDC), 265–291 (CPRD…GEDC), and 292–323 (GWLR…QDCS). An N-linked (GlcNAc...) asparagine glycan is attached at Asn277. Cystine bridges form between Cys296–Cys306 and Cys313–Cys322. Fibronectin type-III domains follow at residues 327–419 (PPEN…TPQG), 420–504 (LKFK…TLID), 505–594 (GPTQ…TEID), 595–686 (APKN…TELD), 687–776 (SPRD…VRPI), 777–863 (TQLH…TGMD), 864–952 (APKD…AMDA), 953–1037 (PLGV…TLLD), and 1038–1126 (PPTN…GGRV). N-linked (GlcNAc...) asparagine glycosylation is found at Asn391, Asn469, and Asn580. N-linked (GlcNAc...) asparagine glycosylation is found at Asn734, Asn790, Asn872, Asn1031, Asn1041, Asn1256, and Asn1342. A Fibrinogen C-terminal domain is found at 1124 to 1339 (GRVFANPQDC…FVEMKMRPYN (216 aa)).

Belongs to the tenascin family. As to quaternary structure, forms homodimers and homotrimers. Interacts with CNTN1, NFASC and CSPG5. Brain specific.

The protein resides in the secreted. It is found in the extracellular space. The protein localises to the extracellular matrix. In terms of biological role, neural extracellular matrix (ECM) protein involved in interactions with different cells and matrix components. Involved in cell attachment and neurite formation. Interaction with CNTN1 enhances the neurite outgrowth. The chain is Tenascin-R (TNR) from Gallus gallus (Chicken).